The chain runs to 273 residues: Undecaprenyl-diphosphatase (273 aa).

7 helical membrane passes run 6–26 (SLLIAAILGVVEGLTEFLPVS), 45–65 (AKTFEVVIQLGSILAVVVMFW), 90–110 (LTLIHILLGMIPAVVLGLLFH), 116–136 (LFNPINVMYALVVGGLLLIAA), 190–210 (YAASEFSFLLAVPMMMGATAL), 222–242 (GDIPMFAVGFITAFVVALIAI), and 252–272 (ISFIPFAIYRFIVAAAVYVVF).

It belongs to the UppP family.

It is found in the cell inner membrane. The enzyme catalyses di-trans,octa-cis-undecaprenyl diphosphate + H2O = di-trans,octa-cis-undecaprenyl phosphate + phosphate + H(+). In terms of biological role, catalyzes the dephosphorylation of undecaprenyl diphosphate (UPP). Confers resistance to bacitracin. In Escherichia coli O127:H6 (strain E2348/69 / EPEC), this protein is Undecaprenyl-diphosphatase.